Here is a 313-residue protein sequence, read N- to C-terminus: Tetraspanning orphan receptor (313 aa).

Topologically, residues 1–54 (PQCESETNFHYDIPPGYKDDVLVDVNNMSPSLVSDTQKHERGSHEVKIKHFSPY) are extracellular. The helical transmembrane segment at 55-75 (IAVCVTTFSLAFCCFMVHAAI) threads the bilayer. Residues 76 to 82 (TRQPTHL) are Cytoplasmic-facing. The helical transmembrane segment at 83-103 (LPFFFIQVFDLIICLIHILGF) threads the bilayer. The Extracellular portion of the chain corresponds to 104 to 129 (MSSTSDIRLVIHTKTGPIYIKSTGLT). Residues 130 to 150 (FIILSISCMMLAFKAYCLGMV) traverse the membrane as a helical segment. The Cytoplasmic segment spans residues 151-313 (WDCYKYLMLN…NASSNAHSSC (163 aa)). Disordered stretches follow at residues 192-218 (NNSI…YDPA) and 279-313 (NTNT…HSSC). Residues 279–295 (NTNTSTTTSVISPLTTT) show a composition bias toward low complexity. Over residues 301-313 (QINNASSNAHSSC) the composition is skewed to polar residues.

In terms of assembly, interacts (via N-terminal extracellular domain) with human C2a. Phosphorylated on tyrosine residues.

Its subcellular location is the cell membrane. In terms of biological role, cell surface receptor that binds to human complement C2a protein. This results in inhibition of the classical and lectin pathways of complement activation, probably due to interference with binding of C2a to C4b and interference with cleavage by C1 or MASP2 such that C3 convertase cannot be formed. This infers resistance to complement-mediated cell lysis, allowing parasite survival and infection. The protein is Tetraspanning orphan receptor of Schistosoma haematobium (Blood fluke).